Here is a 472-residue protein sequence, read N- to C-terminus: DNA-cytosine methyltransferase (472 aa).

One can recognise an SAM-dependent MTase C5-type domain in the interval 87-457; sequence FRFIDLFAGI…KLLEPKIKQA (371 aa). The active site involves Cys-177.

It belongs to the class I-like SAM-binding methyltransferase superfamily. C5-methyltransferase family.

It carries out the reaction a 2'-deoxycytidine in DNA + S-adenosyl-L-methionine = a 5-methyl-2'-deoxycytidine in DNA + S-adenosyl-L-homocysteine + H(+). Its function is as follows. This methylase recognizes the double-stranded sequence 5'-CCWGG-3', methylates C-2 on both strands. The sequence is that of DNA-cytosine methyltransferase (dcm) from Escherichia coli O157:H7.